Reading from the N-terminus, the 128-residue chain is Small ribosomal subunit protein uS11 (128 aa).

This sequence belongs to the universal ribosomal protein uS11 family. As to quaternary structure, part of the 30S ribosomal subunit. Interacts with proteins S7 and S18. Binds to IF-3.

In terms of biological role, located on the platform of the 30S subunit, it bridges several disparate RNA helices of the 16S rRNA. Forms part of the Shine-Dalgarno cleft in the 70S ribosome. The sequence is that of Small ribosomal subunit protein uS11 from Ligilactobacillus salivarius (strain UCC118) (Lactobacillus salivarius).